Consider the following 259-residue polypeptide: Hydroxyacylglutathione hydrolase (259 aa).

Zn(2+) contacts are provided by H56, H58, D60, H61, H112, D133, and H171.

It belongs to the metallo-beta-lactamase superfamily. Glyoxalase II family. Monomer. The cofactor is Zn(2+).

It catalyses the reaction an S-(2-hydroxyacyl)glutathione + H2O = a 2-hydroxy carboxylate + glutathione + H(+). Its pathway is secondary metabolite metabolism; methylglyoxal degradation; (R)-lactate from methylglyoxal: step 2/2. Functionally, thiolesterase that catalyzes the hydrolysis of S-D-lactoyl-glutathione to form glutathione and D-lactic acid. This chain is Hydroxyacylglutathione hydrolase, found in Pseudomonas putida (strain W619).